Consider the following 313-residue polypeptide: Glyoxylate/hydroxypyruvate reductase A (313 aa).

Residue Arg228 is part of the active site. The Proton donor role is filled by His276.

Belongs to the D-isomer specific 2-hydroxyacid dehydrogenase family. GhrA subfamily.

It is found in the cytoplasm. It catalyses the reaction glycolate + NADP(+) = glyoxylate + NADPH + H(+). The catalysed reaction is (R)-glycerate + NAD(+) = 3-hydroxypyruvate + NADH + H(+). The enzyme catalyses (R)-glycerate + NADP(+) = 3-hydroxypyruvate + NADPH + H(+). Its function is as follows. Catalyzes the NADPH-dependent reduction of glyoxylate and hydroxypyruvate into glycolate and glycerate, respectively. The sequence is that of Glyoxylate/hydroxypyruvate reductase A from Yersinia enterocolitica serotype O:8 / biotype 1B (strain NCTC 13174 / 8081).